A 505-amino-acid chain; its full sequence is Catalase (505 aa).

The tract at residues 1-25 is disordered; the sequence is MSRQDKKLTGVFGHPVSDRENSMTA. Residues His56 and Asn129 contribute to the active site. A heme-binding site is contributed by Tyr339.

Belongs to the catalase family. As to quaternary structure, homodimer. The cofactor is heme.

It catalyses the reaction 2 H2O2 = O2 + 2 H2O. In terms of biological role, decomposes hydrogen peroxide into water and oxygen; serves to protect cells from the toxic effects of hydrogen peroxide. This is Catalase (katA) from Staphylococcus aureus (strain MRSA252).